We begin with the raw amino-acid sequence, 325 residues long: ATP synthase gamma chain (325 aa).

The protein belongs to the ATPase gamma chain family. F-type ATPases have 2 components, CF(1) - the catalytic core - and CF(0) - the membrane proton channel. CF(1) has five subunits: alpha(3), beta(3), gamma(1), delta(1), epsilon(1). CF(0) has three main subunits: a, b and c.

Its subcellular location is the cell membrane. Produces ATP from ADP in the presence of a proton gradient across the membrane. The gamma chain is believed to be important in regulating ATPase activity and the flow of protons through the CF(0) complex. In Corynebacterium urealyticum (strain ATCC 43042 / DSM 7109), this protein is ATP synthase gamma chain.